The chain runs to 156 residues: Transmembrane protein 50 homolog (156 aa).

4 consecutive transmembrane segments (helical) span residues 5 to 25 (IMKYLPALAGIIFTAGWFLWI), 45 to 65 (IQWIYYLPGIFATLGMVMANI), 87 to 107 (VWLFISFAISFGCIGAALWIM), and 124 to 144 (PGIAITLQTSLIFLSSLLLVF).

It belongs to the UPF0220 family.

It is found in the membrane. This chain is Transmembrane protein 50 homolog (tmem50), found in Dictyostelium discoideum (Social amoeba).